We begin with the raw amino-acid sequence, 167 residues long: uncharacterized protein (167 aa).

An N-terminal signal peptide occupies residues 1-23 (MKRLHKRFLLATFCALFTATLQA). An intrachain disulfide couples C39 to C77.

It belongs to the fimbrial protein family.

It localises to the fimbrium. This is an uncharacterized protein from Escherichia coli (strain K12).